Consider the following 483-residue polypeptide: Probable zinc metalloprotease PTRG_04977 (483 aa).

The N-terminal stretch at 1–18 (MLFRSALLSNVLLLPACA) is a signal peptide. N96 and N121 each carry an N-linked (GlcNAc...) asparagine glycan. Zn(2+)-binding residues include H167, D187, and E220. N235 is a glycosylation site (N-linked (GlcNAc...) asparagine). D247 is a Zn(2+) binding site. Residues N310, N362, N401, N411, and N421 are each glycosylated (N-linked (GlcNAc...) asparagine). Residues 396 to 483 (PAMPRNVTID…KSPAVYPFPG (88 aa)) form the Fibronectin type-III domain.

This sequence belongs to the peptidase M28 family. M28B subfamily. Zn(2+) is required as a cofactor.

It localises to the secreted. This is Probable zinc metalloprotease PTRG_04977 from Pyrenophora tritici-repentis (strain Pt-1C-BFP) (Wheat tan spot fungus).